Here is a 345-residue protein sequence, read N- to C-terminus: Uroporphyrinogen decarboxylase (345 aa).

Substrate is bound by residues 27–31, Phe46, Asp76, Tyr152, Ser207, and His321; that span reads RQAGR.

The protein belongs to the uroporphyrinogen decarboxylase family. As to quaternary structure, homodimer.

It localises to the cytoplasm. It carries out the reaction uroporphyrinogen III + 4 H(+) = coproporphyrinogen III + 4 CO2. The protein operates within porphyrin-containing compound metabolism; protoporphyrin-IX biosynthesis; coproporphyrinogen-III from 5-aminolevulinate: step 4/4. Its function is as follows. Catalyzes the decarboxylation of four acetate groups of uroporphyrinogen-III to yield coproporphyrinogen-III. This is Uroporphyrinogen decarboxylase from Staphylococcus aureus (strain USA300 / TCH1516).